A 292-amino-acid polypeptide reads, in one-letter code: S-methyl-5'-thioadenosine phosphorylase (292 aa).

Phosphate contacts are provided by residues S11, 53–54 (RH), and 86–87 (SA). M184 serves as a coordination point for substrate. Phosphate is bound at residue T185. A substrate-binding site is contributed by 208–210 (DYD).

This sequence belongs to the PNP/MTAP phosphorylase family. MTAP subfamily. In terms of assembly, homohexamer. Dimer of a homotrimer.

It carries out the reaction S-methyl-5'-thioadenosine + phosphate = 5-(methylsulfanyl)-alpha-D-ribose 1-phosphate + adenine. It functions in the pathway amino-acid biosynthesis; L-methionine biosynthesis via salvage pathway; S-methyl-5-thio-alpha-D-ribose 1-phosphate from S-methyl-5'-thioadenosine (phosphorylase route): step 1/1. Catalyzes the reversible phosphorylation of S-methyl-5'-thioadenosine (MTA) to adenine and 5-methylthioribose-1-phosphate. Involved in the breakdown of MTA, a major by-product of polyamine biosynthesis. Responsible for the first step in the methionine salvage pathway after MTA has been generated from S-adenosylmethionine. Has broad substrate specificity with 6-aminopurine nucleosides as preferred substrates. This chain is S-methyl-5'-thioadenosine phosphorylase, found in Koribacter versatilis (strain Ellin345).